The chain runs to 803 residues: MTFNHKKMEPKWQQYWSEHNTFKTTEDKDKENFYALDMFPYPSGAGLHVGHPEGYTATDILSRMKRMQGKNVLHPIGWDAFGLPAEQYAIDTGNDPEEFTALNIANFTRQIKSLGFSYDWDREINTTDPEYYKWTQWIFEKLYENGLAYEAEIAVNWCPALGTVLANEEVIDGKSERGGFPVFRKPMRQWMLKITAYADRLLDDLDLVDWPENIKDMQRNWIGRSEGAEVTFKIKDSDETFNVFTTRPDTLFGATYTVFAPEHELIEKITTPEQKEAVETYKKQVELKSELERTDLAKDKTGVFTGAYAINPINGEEVPIWIADYVLIQYGTGAIMAVPAHDERDFEFAQQFGLNIRPVLEGGDVTKEAFTGDGPHINSEFLDGLAKEEAITAAIDWLEKEGIGSRKITYRLRDWLFSRQRYWGEPIPVIHWEDGETTLVPEEELPLLLPKATEIKPSGTGESPLANLHDWVNVTDESGRKGRRETNTMPQWAGSSWYFLRYIDPKNTEAIADKEKLIEWLPVDVYIGGAEHAVLHLLYARFWHKFLYDIGVVPTKEPFQKLFNQGMILGENNEKMSKSRGNVVNPDEVVEKYGADTLRMYEMFMGPLDASIAWNENGLEGARKFLDRIWRLFVTEEGILAEKVTTTANANLEKAYHHMVKTVTNHYENLRFNTGISQLMIFINEAYKQDSIPKEYVEGFVQLLSPIAPHLAEELWEILGHTETISYVTWPTYDETKLVEDEVEIVLQVNGKVKSKITVAKSLGKEELEKIAQEDDKMKENLEGKTIRKVIVVPGKLVNIVGN.

A 'HIGH' region motif is present at residues P40 to H51. The 'KMSKS' region signature appears at K575 to S579. K578 is a binding site for ATP.

The protein belongs to the class-I aminoacyl-tRNA synthetase family.

Its subcellular location is the cytoplasm. The enzyme catalyses tRNA(Leu) + L-leucine + ATP = L-leucyl-tRNA(Leu) + AMP + diphosphate. In Listeria welshimeri serovar 6b (strain ATCC 35897 / DSM 20650 / CCUG 15529 / CIP 8149 / NCTC 11857 / SLCC 5334 / V8), this protein is Leucine--tRNA ligase.